We begin with the raw amino-acid sequence, 191 residues long: Thymidylate kinase (191 aa).

7 to 14 lines the ATP pocket; the sequence is GIDGVGKS.

This sequence belongs to the thymidylate kinase family.

It catalyses the reaction dTMP + ATP = dTDP + ADP. In terms of biological role, phosphorylation of dTMP to form dTDP in both de novo and salvage pathways of dTTP synthesis. This Helicobacter acinonychis (strain Sheeba) protein is Thymidylate kinase.